The primary structure comprises 155 residues: uncharacterized protein (155 aa).

The Macro domain maps to 1 to 155; it reads MIVKYIKGDI…IVIVDWEPLL (155 aa).

This is an uncharacterized protein from Escherichia coli (Bacteriophage T4).